A 144-amino-acid polypeptide reads, in one-letter code: Large ribosomal subunit protein uL15 (144 aa).

The interval 1–60 (MKMNTLKPAEGSKQSPKRLGRGIGSGLGKTGGRGHKGQTSRSGGTIRPGFEGGQQPLQRR) is disordered. The span at 21–31 (RGIGSGLGKTG) shows a compositional bias: gly residues.

This sequence belongs to the universal ribosomal protein uL15 family. Part of the 50S ribosomal subunit.

Its function is as follows. Binds to the 23S rRNA. This is Large ribosomal subunit protein uL15 from Hahella chejuensis (strain KCTC 2396).